A 271-amino-acid chain; its full sequence is MPPLRETVRVHGLSASKALGQNFLFDEQLLDRIAAIPGDLDGATVFEVGPGPGGLTRALLRTGARVIAVERDERCLPLLADLAEAFPGQLTVIADDAMAVDVDALTGGDPYHIVANLPYNVGTALFTRWLEPAAWPPRWLSLTLMFQLEVAERIVAPVGTSAYGRLAVLAQWRARARIAMKVHRSAFTPPPKVMSAIVQLTPADQPPGVDPRILSRLTEKGFGQRRKMLRQSLKGIDGAVAAAEALGIDPTRRAETVSVAEWVALARALGR.

S-adenosyl-L-methionine is bound by residues asparagine 22, leucine 24, glycine 49, glutamate 70, aspartate 96, and asparagine 116.

The protein belongs to the class I-like SAM-binding methyltransferase superfamily. rRNA adenine N(6)-methyltransferase family. RsmA subfamily.

The protein localises to the cytoplasm. The catalysed reaction is adenosine(1518)/adenosine(1519) in 16S rRNA + 4 S-adenosyl-L-methionine = N(6)-dimethyladenosine(1518)/N(6)-dimethyladenosine(1519) in 16S rRNA + 4 S-adenosyl-L-homocysteine + 4 H(+). Its function is as follows. Specifically dimethylates two adjacent adenosines (A1518 and A1519) in the loop of a conserved hairpin near the 3'-end of 16S rRNA in the 30S particle. May play a critical role in biogenesis of 30S subunits. The polypeptide is Ribosomal RNA small subunit methyltransferase A (Sphingopyxis alaskensis (strain DSM 13593 / LMG 18877 / RB2256) (Sphingomonas alaskensis)).